The following is a 311-amino-acid chain: Phosphoribosylaminoimidazole-succinocarboxamide synthase (311 aa).

Belongs to the SAICAR synthetase family.

The catalysed reaction is 5-amino-1-(5-phospho-D-ribosyl)imidazole-4-carboxylate + L-aspartate + ATP = (2S)-2-[5-amino-1-(5-phospho-beta-D-ribosyl)imidazole-4-carboxamido]succinate + ADP + phosphate + 2 H(+). Its pathway is purine metabolism; IMP biosynthesis via de novo pathway; 5-amino-1-(5-phospho-D-ribosyl)imidazole-4-carboxamide from 5-amino-1-(5-phospho-D-ribosyl)imidazole-4-carboxylate: step 1/2. This is Phosphoribosylaminoimidazole-succinocarboxamide synthase from Azoarcus sp. (strain BH72).